The primary structure comprises 284 residues: L-ribulose-5-phosphate 3-epimerase UlaE (284 aa).

This sequence belongs to the L-ribulose-5-phosphate 3-epimerase family.

It catalyses the reaction L-ribulose 5-phosphate = L-xylulose 5-phosphate. The protein operates within cofactor degradation; L-ascorbate degradation; D-xylulose 5-phosphate from L-ascorbate: step 3/4. In terms of biological role, catalyzes the isomerization of L-xylulose-5-phosphate to L-ribulose-5-phosphate. Is involved in the anaerobic L-ascorbate utilization. In Salmonella dublin (strain CT_02021853), this protein is L-ribulose-5-phosphate 3-epimerase UlaE.